We begin with the raw amino-acid sequence, 475 residues long: Aspartyl/glutamyl-tRNA(Asn/Gln) amidotransferase subunit B (475 aa).

The protein belongs to the GatB/GatE family. GatB subfamily. As to quaternary structure, heterotrimer of A, B and C subunits.

It catalyses the reaction L-glutamyl-tRNA(Gln) + L-glutamine + ATP + H2O = L-glutaminyl-tRNA(Gln) + L-glutamate + ADP + phosphate + H(+). The enzyme catalyses L-aspartyl-tRNA(Asn) + L-glutamine + ATP + H2O = L-asparaginyl-tRNA(Asn) + L-glutamate + ADP + phosphate + 2 H(+). Allows the formation of correctly charged Asn-tRNA(Asn) or Gln-tRNA(Gln) through the transamidation of misacylated Asp-tRNA(Asn) or Glu-tRNA(Gln) in organisms which lack either or both of asparaginyl-tRNA or glutaminyl-tRNA synthetases. The reaction takes place in the presence of glutamine and ATP through an activated phospho-Asp-tRNA(Asn) or phospho-Glu-tRNA(Gln). This is Aspartyl/glutamyl-tRNA(Asn/Gln) amidotransferase subunit B from Staphylococcus saprophyticus subsp. saprophyticus (strain ATCC 15305 / DSM 20229 / NCIMB 8711 / NCTC 7292 / S-41).